The chain runs to 330 residues: AP-1-like transcription factor YAP3 (330 aa).

A disordered region spans residues S114–K150. Positions F121–H138 are enriched in polar residues. Position 135 is a phosphoserine (S135). The bZIP domain maps to D144–L207. The segment at K147–R168 is basic motif. The tract at residues L172–L207 is leucine-zipper.

The protein belongs to the bZIP family. YAP subfamily. As to quaternary structure, homodimer. Interacts with the C-terminal, cytoplasmic tail of the multidrug resistance ABC transporter PDR5.

It localises to the cytoplasm. It is found in the nucleus. Functionally, transcription activator involved in the regulation of genes expressed in response to environmental changes. When overexpressed it activates transcription of the multidrug resistance ABC transporter PDR5, thus conferring resistance to the fungicide fluconazole (FCZ) and cycloheximide. When overexpressed, it also confers, independent of PDR5, increased resistance to 4-nitroquinoline-N-oxide (4-NQO). Preferentially binds 5'-TTACTAA-3'. In Saccharomyces cerevisiae (strain ATCC 204508 / S288c) (Baker's yeast), this protein is AP-1-like transcription factor YAP3 (YAP3).